A 301-amino-acid polypeptide reads, in one-letter code: Probable 5-dehydro-4-deoxyglucarate dehydratase (301 aa).

It belongs to the DapA family.

The catalysed reaction is 5-dehydro-4-deoxy-D-glucarate + H(+) = 2,5-dioxopentanoate + CO2 + H2O. Its pathway is carbohydrate acid metabolism; D-glucarate degradation; 2,5-dioxopentanoate from D-glucarate: step 2/2. The polypeptide is Probable 5-dehydro-4-deoxyglucarate dehydratase (Cereibacter sphaeroides (strain ATCC 17023 / DSM 158 / JCM 6121 / CCUG 31486 / LMG 2827 / NBRC 12203 / NCIMB 8253 / ATH 2.4.1.) (Rhodobacter sphaeroides)).